Reading from the N-terminus, the 317-residue chain is Probable porphobilinogen deaminase (317 aa).

Cysteine 234 carries the S-(dipyrrolylmethanemethyl)cysteine modification.

The protein belongs to the HMBS family. Requires dipyrromethane as cofactor.

It carries out the reaction 4 porphobilinogen + H2O = hydroxymethylbilane + 4 NH4(+). It functions in the pathway porphyrin-containing compound metabolism; protoporphyrin-IX biosynthesis; coproporphyrinogen-III from 5-aminolevulinate: step 2/4. Functionally, tetrapolymerization of the monopyrrole PBG into the hydroxymethylbilane pre-uroporphyrinogen in several discrete steps. This Methanosarcina acetivorans (strain ATCC 35395 / DSM 2834 / JCM 12185 / C2A) protein is Probable porphobilinogen deaminase.